The primary structure comprises 261 residues: MASSKLLSLALFLVLLTHANSATETSFNFPNFHTDDKLILQGNATISSKGQLQLTGVGSNELPRVDSLGRAFYSDPIQIKDSNNVASFNTNFTFIIRAKNQSISAYGLAFALVPVNSPPQKKQEFLGIFNTNNPEPNARTVAVVFNTFKNRIDFDKNFIKPYVNENCDFHKYNGEKTDVQITYDSSNNDLRVFLHFTVSQVKCSVSATVHLEKEVDEWVSVGFSATSGLTEDTTETHDVLSWSFSSKFRNKLSNILLNNIL.

A signal peptide spans 1 to 21 (MASSKLLSLALFLVLLTHANS). N-linked (GlcNAc...) asparagine glycans are attached at residues N43, N91, and N100. C167 and C203 form a disulfide bridge. A propeptide spanning residues 255-261 (ILLNNIL) is cleaved from the precursor.

This sequence belongs to the leguminous lectin family. As to quaternary structure, monomer. In terms of processing, the C-terminal segment appears to be highly susceptible to proteolysis.

In terms of biological role, seed storage. This carbohydrate-binding lectin has toxic effects on bean bruchid pests. The sequence is that of Arcelin-5A (ARC5A) from Phaseolus vulgaris (Kidney bean).